The primary structure comprises 943 residues: Protein translocase subunit SecA (943 aa).

Residues Gln90, 108–112 (GEGKT), and Asp509 each bind ATP. The segment at 535-560 (PNNEHKPPIPKQRSSKSKGGFSSKVG) is disordered. Residues 551-560 (SKGGFSSKVG) show a composition bias toward low complexity.

It belongs to the SecA family. As to quaternary structure, monomer and homodimer. Part of the essential Sec protein translocation apparatus which comprises SecA, SecYEG and auxiliary proteins SecDF. Other proteins may also be involved.

It localises to the cell inner membrane. The protein localises to the cellular thylakoid membrane. It is found in the cytoplasm. The catalysed reaction is ATP + H2O + cellular proteinSide 1 = ADP + phosphate + cellular proteinSide 2.. In terms of biological role, part of the Sec protein translocase complex. Interacts with the SecYEG preprotein conducting channel. Has a central role in coupling the hydrolysis of ATP to the transfer of proteins into and across the cell membrane, serving as an ATP-driven molecular motor driving the stepwise translocation of polypeptide chains across the membrane. Functionally, probably participates in protein translocation into and across both the cytoplasmic and thylakoid membranes in cyanobacterial cells. The sequence is that of Protein translocase subunit SecA from Prochlorococcus marinus (strain MIT 9312).